Here is a 489-residue protein sequence, read N- to C-terminus: L-asparagine permease 1 (489 aa).

Helical transmembrane passes span 25-45 (QLQM…GAGG), 49-69 (KAGP…FLIL), 100-120 (AVGW…TTAI), 137-157 (ILAL…VEWF), 162-182 (FWAA…GTVF), 210-230 (WLPL…VELV), 255-275 (IAIF…YTAY), 289-309 (IGFH…ALSS), 344-364 (YGGI…NAFK), 369-389 (FEIV…TIVL), 413-433 (SPYS…TMAS), and 439-459 (TWTV…WYLV).

Belongs to the amino acid-polyamine-organocation (APC) superfamily. Amino acid transporter (AAT) (TC 2.A.3.1) family.

It is found in the cell membrane. This chain is L-asparagine permease 1 (ansP1), found in Mycobacterium tuberculosis (strain CDC 1551 / Oshkosh).